Reading from the N-terminus, the 120-residue chain is Immunoglobulin lambda variable 4-60 (120 aa).

The signal sequence occupies residues 1-21; that stretch reads MAWTPLLLLFPLLLHCTGSLS. Residues 22-46 form a framework-1 region; that stretch reads QPVLTQSSSASASLGSSVKLTCTLS. An Ig-like domain is found at 23-120; that stretch reads PVLTQSSSAS…YYCETWDSNT (98 aa). Residues C43 and C113 are joined by a disulfide bond. The segment at 47–53 is complementarity-determining-1; that stretch reads SGHSSYI. Residues 54–70 are framework-2; it reads IAWHQQQPGKAPRYLMK. The tract at residues 71–77 is complementarity-determining-2; it reads LEGSGSY. The framework-3 stretch occupies residues 78 to 113; it reads NKGSGVPDRFSGSSSGADRYLTISNLQFEDEADYYC. Positions 114–120 are complementarity-determining-3; sequence ETWDSNT.

As to quaternary structure, immunoglobulins are composed of two identical heavy chains and two identical light chains; disulfide-linked.

It is found in the secreted. Its subcellular location is the cell membrane. Its function is as follows. V region of the variable domain of immunoglobulin light chains that participates in the antigen recognition. Immunoglobulins, also known as antibodies, are membrane-bound or secreted glycoproteins produced by B lymphocytes. In the recognition phase of humoral immunity, the membrane-bound immunoglobulins serve as receptors which, upon binding of a specific antigen, trigger the clonal expansion and differentiation of B lymphocytes into immunoglobulins-secreting plasma cells. Secreted immunoglobulins mediate the effector phase of humoral immunity, which results in the elimination of bound antigens. The antigen binding site is formed by the variable domain of one heavy chain, together with that of its associated light chain. Thus, each immunoglobulin has two antigen binding sites with remarkable affinity for a particular antigen. The variable domains are assembled by a process called V-(D)-J rearrangement and can then be subjected to somatic hypermutations which, after exposure to antigen and selection, allow affinity maturation for a particular antigen. The polypeptide is Immunoglobulin lambda variable 4-60 (Homo sapiens (Human)).